The primary structure comprises 158 residues: GTP-dependent dephospho-CoA kinase (158 aa).

GTP contacts are provided by Asp-35, Val-36, Asp-54, Lys-56, Glu-109, and Asp-132.

The protein belongs to the GTP-dependent DPCK family.

It catalyses the reaction 3'-dephospho-CoA + GTP = GDP + CoA + H(+). It participates in cofactor biosynthesis; coenzyme A biosynthesis. In terms of biological role, catalyzes the GTP-dependent phosphorylation of the 3'-hydroxyl group of dephosphocoenzyme A to form coenzyme A (CoA). The sequence is that of GTP-dependent dephospho-CoA kinase from Methanococcus maripaludis (strain DSM 14266 / JCM 13030 / NBRC 101832 / S2 / LL).